We begin with the raw amino-acid sequence, 159 residues long: Ribosomal RNA large subunit methyltransferase H (159 aa).

S-adenosyl-L-methionine is bound by residues Leu76, Gly108, and 127 to 132 (FSKMTF).

Belongs to the RNA methyltransferase RlmH family. As to quaternary structure, homodimer.

It localises to the cytoplasm. The enzyme catalyses pseudouridine(1915) in 23S rRNA + S-adenosyl-L-methionine = N(3)-methylpseudouridine(1915) in 23S rRNA + S-adenosyl-L-homocysteine + H(+). Its function is as follows. Specifically methylates the pseudouridine at position 1915 (m3Psi1915) in 23S rRNA. The chain is Ribosomal RNA large subunit methyltransferase H from Exiguobacterium sibiricum (strain DSM 17290 / CCUG 55495 / CIP 109462 / JCM 13490 / 255-15).